The chain runs to 515 residues: 2-isopropylmalate synthase (515 aa).

Residues 4-266 (IKIFDTTLRD…ETGLILKETK (263 aa)) enclose the Pyruvate carboxyltransferase domain. Aspartate 13, histidine 201, histidine 203, and asparagine 237 together coordinate Mn(2+). The regulatory domain stretch occupies residues 392–515 (KLIQFGVSYD…ANLTRLVYES (124 aa)).

This sequence belongs to the alpha-IPM synthase/homocitrate synthase family. LeuA type 1 subfamily. In terms of assembly, homodimer. Mn(2+) is required as a cofactor.

The protein localises to the cytoplasm. The enzyme catalyses 3-methyl-2-oxobutanoate + acetyl-CoA + H2O = (2S)-2-isopropylmalate + CoA + H(+). It functions in the pathway amino-acid biosynthesis; L-leucine biosynthesis; L-leucine from 3-methyl-2-oxobutanoate: step 1/4. Its function is as follows. Catalyzes the condensation of the acetyl group of acetyl-CoA with 3-methyl-2-oxobutanoate (2-ketoisovalerate) to form 3-carboxy-3-hydroxy-4-methylpentanoate (2-isopropylmalate). The sequence is that of 2-isopropylmalate synthase from Oceanobacillus iheyensis (strain DSM 14371 / CIP 107618 / JCM 11309 / KCTC 3954 / HTE831).